A 332-amino-acid polypeptide reads, in one-letter code: Cilia- and flagella-associated protein 119 (332 aa).

Residues 1 to 10 (MITPRSSQSL) show a composition bias toward polar residues. Disordered regions lie at residues 1–70 (MITP…ANLF), 246–271 (EDEE…EAEQ), and 308–332 (RLSN…SKAK). Residues 14-30 (VQTELEHSPKLQEEPDR) are compositionally biased toward basic and acidic residues. A compositionally biased stretch (polar residues) spans 49-58 (ESPAEATSSP). A coiled-coil region spans residues 287–308 (LNKELRQLQQLVEERLKESEER).

In terms of tissue distribution, specifically expressed in testis (at protein level).

The protein localises to the cell projection. Its subcellular location is the cilium. It localises to the flagellum. The protein resides in the cytoplasmic vesicle. It is found in the secretory vesicle. The protein localises to the acrosome. Its subcellular location is the cytoplasm. The chain is Cilia- and flagella-associated protein 119 from Rattus norvegicus (Rat).